Consider the following 1687-residue polypeptide: Muscle calcium channel subunit alpha-1 (1687 aa).

Residues 1–33 (MDDAVCPTETDNVQNKQKATTPKRTQRRGGKQQ) are disordered. At 1–61 (MDDAVCPTET…IFCIKIVDSK (61 aa)) the chain is on the cytoplasmic side. Residues 9–23 (ETDNVQNKQKATTPK) are compositionally biased toward polar residues. The stretch at 48–330 (NPLRIFCIKI…LILGVLSGEF (283 aa)) is one I repeat. A helical membrane pass occupies residues 62 to 80 (LFEYFILLTIFANCVALAV). Topologically, residues 81–99 (YTPYPSGDSNITNQMLEKI) are extracellular. Residue Asn-90 is glycosylated (N-linked (GlcNAc...) asparagine). The helical transmembrane segment at 100 to 117 (EYIFLVIFTSECVMKIIA) threads the bilayer. Topologically, residues 118 to 130 (YGFVLHTGSYLRN) are cytoplasmic. Residues 131–145 (GWNFLDFFIVVIGMI) traverse the membrane as a helical segment. Residues 146–157 (STALSNLVKEGF) lie on the Extracellular side of the membrane. Residues 158–176 (DVKALRAFRVLRPLRLVSG) traverse the membrane as a helical segment. Topologically, residues 177–196 (VPSLQVVLNSILKAMIPLLH) are cytoplasmic. Residues 197–216 (IALLVLFVIIIYAIIGLELF) traverse the membrane as a helical segment. Topologically, residues 217 to 302 (SGKLHKTCRH…SIQDAMGSSW (86 aa)) are extracellular. Glu-285 is a Ca(2+) binding site. The helical transmembrane segment at 303 to 327 (EWIYFVSMVILGAFFVMNLILGVLS) threads the bilayer. At 328 to 434 (GEFSKERTKA…RACRKAVKSQ (107 aa)) the chain is on the cytoplasmic side. The II repeat unit spans residues 420-667 (NRRIRRACRK…VFLAIAVDNL (248 aa)). A helical transmembrane segment spans residues 435–454 (AFYWLIILLVFLNTGVLATE). The Extracellular portion of the chain corresponds to 455-467 (HYRQPIWLDQFQE). Residues 468 to 487 (YTNIFFIALFTCEMILKMYS) form a helical membrane-spanning segment. Over 488–496 (LGFQGYFVS) the chain is Cytoplasmic. Residues 497-515 (LFNRFDCFVVIGSISEMVL) traverse the membrane as a helical segment. Over 516-525 (TSSELMAPLG) the chain is Extracellular. A helical transmembrane segment spans residues 526 to 544 (VSVLRCVRLLRVFKVTKYW). Residues 545-563 (HSLSNLVASLLNSIQSIAS) are Cytoplasmic-facing. A helical membrane pass occupies residues 564–583 (LLLLLFLFIVIFGLLGMQVF). Residues 584 to 639 (GGRFTFKPEEEKPRSNFDSFYQSLLTVFQILTGEDWNVVMYDGIRAYGGVFSFGIV) are Extracellular-facing. Residue Glu-617 participates in Ca(2+) binding. A helical membrane pass occupies residues 640 to 664 (ACIYYIILFICGNYILLNVFLAIAV). The Cytoplasmic portion of the chain corresponds to 665-785 (DNLADADSLS…TNRFRIFCHR (121 aa)). An III repeat occupies 777-1059 (NRFRIFCHRL…IFVGFVIVTF (283 aa)). The chain crosses the membrane as a helical span at residues 786 to 809 (LCNHSNFGNFILCCIMFSSAMLAA). The Extracellular segment spans residues 810–826 (ENPLKADASRNIVLNKF). Residues 827-846 (DYFFTAVFTIELVLKLISYG) form a helical membrane-spanning segment. Topologically, residues 847 to 854 (FVLHDGAF) are cytoplasmic. Residues 855 to 877 (CRSAFNLLDLLVVCVSLISIFFN) traverse the membrane as a helical segment. Residues 878–885 (SNAISVVK) are Extracellular-facing. The chain crosses the membrane as a helical span at residues 886–900 (ILRVLRVLRPLRAIN). At 901–921 (RAKGLKHVVQCVIVAVKTIGN) the chain is on the cytoplasmic side. Residues 922–941 (IVLVTCLLQFMFAVIGVQLF) form a helical membrane-spanning segment. Over 942 to 1030 (KGKFFSCSDG…NGGPIYNFRP (89 aa)) the chain is Extracellular. Residues 979–1068 (REWKNNKFHF…FQNEGEQEYK (90 aa)) form a dihydropyridine binding region. Glu-1005 lines the Ca(2+) pocket. A helical membrane pass occupies residues 1031-1055 (IVAAYYIIYIIIIAFFMVNIFVGFV). At 1056–1110 (IVTFQNEGEQEYKNCELDKNQRNCIEFALKAKPVRRYIPKHSIQYKVWWFVTSSS) the chain is on the cytoplasmic side. An IV repeat occupies 1096–1370 (HSIQYKVWWF…LFVAVIMDNF (275 aa)). Residues 1111–1129 (FEYSIFVLIMINTVTLAMK) form a helical membrane-spanning segment. Residues 1130–1143 (FYKQPEYYSEILDA) are Extracellular-facing. Residues 1144–1163 (LNMIFTAVFSLEFIFKLAAF) form a helical membrane-spanning segment. Residues 1164-1172 (RFKNYFGDA) lie on the Cytoplasmic side of the membrane. Residues 1173-1191 (WNTFDFIIVLGSFIDIVYS) form a helical membrane-spanning segment. Topologically, residues 1192–1219 (EIKTKEQALATCDGQSCNKAKGGSTLIS) are extracellular. The helical transmembrane segment at 1220–1238 (INFFRLFRVMRLVKLLSKG) threads the bilayer. Over 1239 to 1257 (EGIRTLLWTFIKSFQALPY) the chain is Cytoplasmic. The helical transmembrane segment at 1258–1277 (VALLIVMLFFIYAVIGMQVF) threads the bilayer. At 1278-1343 (GKIMLEEGTS…AVNNCGSSIA (66 aa)) the chain is on the extracellular side. Residues 1327–1389 (KCDPESDAVN…LGPHHLDEFI (63 aa)) are dihydropyridine binding. The segment at 1337–1378 (NCGSSIAFPYFISFYVLCSFLIINLFVAVIMDNFDYLTRDWS) is phenylalkylamine binding. A helical transmembrane segment spans residues 1344-1362 (FPYFISFYVLCSFLIINLF). Topologically, residues 1363-1687 (VAVIMDNFDY…PKSKDKDEEF (325 aa)) are cytoplasmic.

Belongs to the calcium channel alpha-1 subunit (TC 1.A.1.11) family. As to expression, predominantly expressed in the larval body wall musculature. In adults, highest expression in thorax followed by head and at a lower extent by abdomen.

It is found in the membrane. Functionally, voltage-sensitive calcium channels (VSCC) mediate the entry of calcium ions into excitable cells and are also involved in a variety of calcium-dependent processes, including muscle contraction, hormone or neurotransmitter release, gene expression, cell motility, cell division and cell death. MDL-alpha1 encodes a dihydropyridine- and diltiazem-sensitive current in larval body wall muscle. The polypeptide is Muscle calcium channel subunit alpha-1 (Musca domestica (House fly)).